Reading from the N-terminus, the 1498-residue chain is Rap guanine nucleotide exchange factor 2 (1498 aa).

Disordered stretches follow at residues 40–59 and 68–101; these read HVSS…SSSL and SEAG…SDPL. Residues 83–94 are compositionally biased toward acidic residues; sequence VDSEDDDDEEDI. 135–252 provides a ligand contact to a nucleoside 3',5'-cyclic phosphate; sequence AFANMTMSVR…QKVEEEGEIV (118 aa). Residues 267 to 380 enclose the N-terminal Ras-GEF domain; it reads KGHIVIKGTS…RLLNIACAAK (114 aa). The 84-residue stretch at 385–468 folds into the PDZ domain; it reads LMTLTKPSRE…LSITVKTNLF (84 aa). Ser501 is modified (phosphoserine). Positions 606 to 692 constitute a Ras-associating domain; the sequence is PDQVLRVFKA…GRYYLKNNME (87 aa). A Phosphothreonine modification is found at Thr644. A Ras-GEF domain is found at 717–944; sequence STVEVATQLS…SQGSTNATVL (228 aa). Phosphoserine occurs at positions 806, 930, 933, 1022, 1079, 1088, 1094, 1115, 1119, 1158, and 1175. Positions 1002–1048 are disordered; the sequence is PATNTLPKNPGDKKPVKSETSPVAPRAGSQQKAQAQPPPPQPQPQHK. Positions 1094 to 1159 are disordered; the sequence is SLERHKKQAE…RSSIVSNSSF (66 aa). Composition is skewed to low complexity over residues 1110-1124 and 1140-1159; these read SSQL…QSSP and SDSG…NSSF. 3 disordered regions span residues 1224 to 1257, 1304 to 1371, and 1392 to 1498; these read STEE…GSHD, TKYN…TKPV, and EGRY…VSAV. Polar residues-rich tracts occupy residues 1246–1257 and 1306–1330; these read GSWTSCSSGSHD and YNRQ…SSTG. Low complexity predominate over residues 1354-1365; that stretch reads EAESSSVTSVTT. Residues 1487–1498 show a composition bias toward acidic residues; sequence TEEDEDEQVSAV.

The protein belongs to the RAPGEF2 family. As to quaternary structure, found in a complex, at least composed of KIDINS220, MAGI2, NTRK1 and RAPGEF2; the complex is mainly formed at late endosomes in a neuronal growth factor (NGF)-dependent manner. Interacts (via C-terminal domain) with NEDD4 (via WW domains); this interaction leads to ubiquitination and degradation via the proteasome pathway in a cAMP-independent manner. Interacts with MAGI1 (via PDZ domain). Interacts with ADRB1 (via C-terminal PDZ motif); the interaction is direct. Interacts (via Ras-associating domain) with RAP1A (via GTP-bound active form). Interacts weakly with HRAS (via GDP- and GTP-bound forms). Interacts (via C-terminal domain) with MAGI2 (via PDZ and WW domains). Interacts with CDH1, CTNNB1 and TJP1. In terms of processing, ubiquitinated by NEDD4, leading to proteasomal degradation. Phosphorylation by PLK2 promotes its activity.

Its subcellular location is the cell junction. It is found in the cytoplasm. The protein localises to the perinuclear region. The protein resides in the cell membrane. It localises to the late endosome. Its function is as follows. Functions as a guanine nucleotide exchange factor (GEF), which activates Rap and Ras family of small GTPases by exchanging bound GDP for free GTP in a cAMP-dependent manner. Serves as a link between cell surface receptors and Rap/Ras GTPases in intracellular signaling cascades. Also acts as an effector for Rap1 by direct association with Rap1-GTP thereby leading to the amplification of Rap1-mediated signaling. Shows weak activity on HRAS. It is controversial whether RAPGEF2 binds cAMP and cGMP or not. Its binding to ligand-activated beta-1 adrenergic receptor ADRB1 leads to the Ras activation through the G(s)-alpha signaling pathway. Involved in the cAMP-induced Ras and Erk1/2 signaling pathway that leads to sustained inhibition of long term melanogenesis by reducing dendrite extension and melanin synthesis. Also provides inhibitory signals for cell proliferation of melanoma cells and promotes their apoptosis in a cAMP-independent nanner. Regulates cAMP-induced neuritogenesis by mediating the Rap1/B-Raf/ERK signaling through a pathway that is independent on both PKA and RAPGEF3/RAPGEF4. Involved in neuron migration and in the formation of the major forebrain fiber connections forming the corpus callosum, the anterior commissure and the hippocampal commissure during brain development. Involved in neuronal growth factor (NGF)-induced sustained activation of Rap1 at late endosomes and in brain-derived neurotrophic factor (BDNF)-induced axon outgrowth of hippocampal neurons. Plays a role in the regulation of embryonic blood vessel formation and in the establishment of basal junction integrity and endothelial barrier function. May be involved in the regulation of the vascular endothelial growth factor receptor KDR and cadherin CDH5 expression at allantois endothelial cell-cell junctions. This is Rap guanine nucleotide exchange factor 2 (RAPGEF2) from Canis lupus familiaris (Dog).